We begin with the raw amino-acid sequence, 306 residues long: Pantothenate kinase (306 aa).

Position 91–98 (91–98 (GSVAVGKS)) interacts with ATP.

This sequence belongs to the prokaryotic pantothenate kinase family.

It is found in the cytoplasm. It catalyses the reaction (R)-pantothenate + ATP = (R)-4'-phosphopantothenate + ADP + H(+). It participates in cofactor biosynthesis; coenzyme A biosynthesis; CoA from (R)-pantothenate: step 1/5. This chain is Pantothenate kinase, found in Streptococcus pneumoniae (strain Hungary19A-6).